The chain runs to 377 residues: MYTFVVRDENSSVYAEVSRLLLATGHWKRLRRDNPRFNLMLGERNRLPFGRLGHEPGLVQLVNYYRGADKLCRKASLVKLIKTSPELAESCTWFPESYVIYPTNLKTPVAPAQNGIQPPISNSRTDEREFFLASYNRKKEDGEGNVWIAKSSAGAKGEGILISSEASELLDFIDNQGQVHVIQKYLEHPLLLEPGHRKFDIRSWVLVDHQYNIYLYREGVLRTASEPYHVDNFQDKTCHLTNHCIQKEYSKNYGKYEEGNEMFFKEFNQYLTSALNITLESSILLQIKHIIRNCLLSVEPAISTKHLPYQSFQLFGFDFMVDEELKVWLIEVNGAPACAQKLYAELCQGIVDIAISSVFPPPDVEQPQTQPAAFIKL.

A TTL domain is found at 3 to 370 (TFVVRDENSS…PPDVEQPQTQ (368 aa)).

Belongs to the tubulin--tyrosine ligase family. In terms of assembly, monomer. It depends on Mg(2+) as a cofactor. K(+) is required as a cofactor.

The catalysed reaction is C-terminal L-alpha-aminoacyl-L-glutamyl-L-glutamyl-[tubulin] + L-tyrosine + ATP = C-terminal L-alpha-aminoacyl-L-glutamyl-L-glutamyl-L-tyrosyl-[tubulin] + ADP + phosphate + H(+). Functionally, catalyzes the post-translational addition of a tyrosine to the C-terminal end of detyrosinated alpha-tubulin. This chain is Tubulin--tyrosine ligase (TTL), found in Homo sapiens (Human).